A 379-amino-acid chain; its full sequence is Putative nucleosome assembly protein C2D10.11C (379 aa).

Residues Met1–Lys10 are compositionally biased toward basic and acidic residues. Disordered regions lie at residues Met1 to Leu30 and Ser345 to Asp379. Residues Ala16–Val28 show a composition bias toward polar residues.

The protein belongs to the nucleosome assembly protein (NAP) family.

The protein localises to the nucleus. This Schizosaccharomyces pombe (strain 972 / ATCC 24843) (Fission yeast) protein is Putative nucleosome assembly protein C2D10.11C.